A 211-amino-acid chain; its full sequence is Thiamine-phosphate synthase (211 aa).

4-amino-2-methyl-5-(diphosphooxymethyl)pyrimidine is bound by residues 39 to 43 and N71; that span reads QLREK. D72 and D91 together coordinate Mg(2+). S110 serves as a coordination point for 4-amino-2-methyl-5-(diphosphooxymethyl)pyrimidine. A 2-[(2R,5Z)-2-carboxy-4-methylthiazol-5(2H)-ylidene]ethyl phosphate-binding site is contributed by 136–138; it reads TAT. K139 lines the 4-amino-2-methyl-5-(diphosphooxymethyl)pyrimidine pocket. Residues A167 and 187-188 each bind 2-[(2R,5Z)-2-carboxy-4-methylthiazol-5(2H)-ylidene]ethyl phosphate; that span reads VS.

This sequence belongs to the thiamine-phosphate synthase family. Mg(2+) serves as cofactor.

It catalyses the reaction 2-[(2R,5Z)-2-carboxy-4-methylthiazol-5(2H)-ylidene]ethyl phosphate + 4-amino-2-methyl-5-(diphosphooxymethyl)pyrimidine + 2 H(+) = thiamine phosphate + CO2 + diphosphate. It carries out the reaction 2-(2-carboxy-4-methylthiazol-5-yl)ethyl phosphate + 4-amino-2-methyl-5-(diphosphooxymethyl)pyrimidine + 2 H(+) = thiamine phosphate + CO2 + diphosphate. The catalysed reaction is 4-methyl-5-(2-phosphooxyethyl)-thiazole + 4-amino-2-methyl-5-(diphosphooxymethyl)pyrimidine + H(+) = thiamine phosphate + diphosphate. Its pathway is cofactor biosynthesis; thiamine diphosphate biosynthesis; thiamine phosphate from 4-amino-2-methyl-5-diphosphomethylpyrimidine and 4-methyl-5-(2-phosphoethyl)-thiazole: step 1/1. Condenses 4-methyl-5-(beta-hydroxyethyl)thiazole monophosphate (THZ-P) and 2-methyl-4-amino-5-hydroxymethyl pyrimidine pyrophosphate (HMP-PP) to form thiamine monophosphate (TMP). The protein is Thiamine-phosphate synthase of Solidesulfovibrio magneticus (strain ATCC 700980 / DSM 13731 / RS-1) (Desulfovibrio magneticus).